The following is a 412-amino-acid chain: Probable tRNA sulfurtransferase (412 aa).

The interval 1-22 (MPDIFTDNTDKQDSDPSRQGFE) is disordered. The THUMP domain occupies 82–190 (PRAAEAAADV…QNLAYVYLET (109 aa)). Residues 208 to 209 (LM), Lys-292, Gly-314, and Gln-323 each bind ATP.

This sequence belongs to the ThiI family.

Its subcellular location is the cytoplasm. It catalyses the reaction [ThiI sulfur-carrier protein]-S-sulfanyl-L-cysteine + a uridine in tRNA + 2 reduced [2Fe-2S]-[ferredoxin] + ATP + H(+) = [ThiI sulfur-carrier protein]-L-cysteine + a 4-thiouridine in tRNA + 2 oxidized [2Fe-2S]-[ferredoxin] + AMP + diphosphate. The enzyme catalyses [ThiS sulfur-carrier protein]-C-terminal Gly-Gly-AMP + S-sulfanyl-L-cysteinyl-[cysteine desulfurase] + AH2 = [ThiS sulfur-carrier protein]-C-terminal-Gly-aminoethanethioate + L-cysteinyl-[cysteine desulfurase] + A + AMP + 2 H(+). The protein operates within cofactor biosynthesis; thiamine diphosphate biosynthesis. Functionally, catalyzes the ATP-dependent transfer of a sulfur to tRNA to produce 4-thiouridine in position 8 of tRNAs, which functions as a near-UV photosensor. Also catalyzes the transfer of sulfur to the sulfur carrier protein ThiS, forming ThiS-thiocarboxylate. This is a step in the synthesis of thiazole, in the thiamine biosynthesis pathway. The sulfur is donated as persulfide by IscS. In Methanosarcina acetivorans (strain ATCC 35395 / DSM 2834 / JCM 12185 / C2A), this protein is Probable tRNA sulfurtransferase.